The primary structure comprises 149 residues: Large ribosomal subunit protein uL13 (149 aa).

This sequence belongs to the universal ribosomal protein uL13 family. Part of the 50S ribosomal subunit.

In terms of biological role, this protein is one of the early assembly proteins of the 50S ribosomal subunit, although it is not seen to bind rRNA by itself. It is important during the early stages of 50S assembly. In Chlorobium phaeovibrioides (strain DSM 265 / 1930) (Prosthecochloris vibrioformis (strain DSM 265)), this protein is Large ribosomal subunit protein uL13.